A 334-amino-acid chain; its full sequence is snRNA-activating protein complex subunit 2 (334 aa).

Disordered regions lie at residues 137–200 (LHSK…STEE) and 271–306 (AGGS…ELKS). The span at 167-180 (IPSSAPAAPSSAPR) shows a compositional bias: low complexity.

In terms of assembly, part of the SNAPc complex composed of 5 subunits: SNAPC1, SNAPC2, SNAPC3, SNAPC4 and SNAPC5. SNAPC2 interacts with TBP and SNAPC4.

The protein localises to the nucleus. In terms of biological role, part of the SNAPc complex required for the transcription of both RNA polymerase II and III small-nuclear RNA genes. Binds to the proximal sequence element (PSE), a non-TATA-box basal promoter element common to these 2 types of genes. Recruits TBP and BRF2 to the U6 snRNA TATA box. The protein is snRNA-activating protein complex subunit 2 (SNAPC2) of Homo sapiens (Human).